A 92-amino-acid chain; its full sequence is Small ribosomal subunit protein uS19 (92 aa).

It belongs to the universal ribosomal protein uS19 family.

Protein S19 forms a complex with S13 that binds strongly to the 16S ribosomal RNA. The protein is Small ribosomal subunit protein uS19 of Francisella tularensis subsp. tularensis (strain FSC 198).